The sequence spans 333 residues: 1,5-anhydro-D-fructose reductase (333 aa).

NADP(+) is bound by residues 9-12, 33-34, arginine 38, 71-76, 93-94, asparagine 120, 162-163, and tyrosine 283; these read ASTI, ST, TTNELH, EK, and WR.

As to quaternary structure, monomer.

The enzyme catalyses 1,5-anhydro-D-mannitol + NADP(+) = 1,5-anhydro-D-fructose + NADPH + H(+). Functionally, catalyzes the NADPH-specific reduction of 1,5-anhydro-D-fructose to 1,5-anhydro-D-mannitol. Also shows some activity against structurally related compounds such as 3-keto-1,5-anhydro-D-fructose, D-glucosone and D-xylosone. The enzyme cannot use NADH as cosubstrate. This Ensifer adhaerens (Sinorhizobium morelense) protein is 1,5-anhydro-D-fructose reductase (afr).